The chain runs to 1180 residues: Lon protease homolog 2, peroxisomal (1180 aa).

Residues 19–366 (LPTCKLDSNL…ELINMINQLI (348 aa)) enclose the Lon N-terminal domain. Positions 416–465 (PISNRGNIKSFNNSENGNNNKTNGSGITSRRPKSNEDGGEVYDEEDDDEE) are disordered. Low complexity predominate over residues 422–444 (NIKSFNNSENGNNNKTNGSGITS). Over residues 452–465 (DGGEVYDEEDDDEE) the composition is skewed to acidic residues. An ATP-binding site is contributed by 667–674 (GPPGTGKT). A Lon proteolytic domain is found at 924 to 1163 (NSRVGIVNGL…YDVMKILWGE (240 aa)). Residues serine 1032 and lysine 1075 contribute to the active site.

This sequence belongs to the peptidase S16 family.

It is found in the peroxisome matrix. It carries out the reaction Hydrolysis of proteins in presence of ATP.. Functionally, ATP-dependent serine protease that mediates the selective degradation of misfolded and unassembled polypeptides in the peroxisomal matrix. Necessary for type 2 peroxisome targeting signal (PTS2)-containing protein processing and facilitates peroxisome matrix protein import. This chain is Lon protease homolog 2, peroxisomal, found in Scheffersomyces stipitis (strain ATCC 58785 / CBS 6054 / NBRC 10063 / NRRL Y-11545) (Yeast).